A 494-amino-acid chain; its full sequence is Aspartyl/glutamyl-tRNA(Asn/Gln) amidotransferase subunit B (494 aa).

The protein belongs to the GatB/GatE family. GatB subfamily. Heterotrimer of A, B and C subunits.

It carries out the reaction L-glutamyl-tRNA(Gln) + L-glutamine + ATP + H2O = L-glutaminyl-tRNA(Gln) + L-glutamate + ADP + phosphate + H(+). The enzyme catalyses L-aspartyl-tRNA(Asn) + L-glutamine + ATP + H2O = L-asparaginyl-tRNA(Asn) + L-glutamate + ADP + phosphate + 2 H(+). In terms of biological role, allows the formation of correctly charged Asn-tRNA(Asn) or Gln-tRNA(Gln) through the transamidation of misacylated Asp-tRNA(Asn) or Glu-tRNA(Gln) in organisms which lack either or both of asparaginyl-tRNA or glutaminyl-tRNA synthetases. The reaction takes place in the presence of glutamine and ATP through an activated phospho-Asp-tRNA(Asn) or phospho-Glu-tRNA(Gln). The polypeptide is Aspartyl/glutamyl-tRNA(Asn/Gln) amidotransferase subunit B (Synechococcus elongatus (strain ATCC 33912 / PCC 7942 / FACHB-805) (Anacystis nidulans R2)).